The primary structure comprises 238 residues: Hydroxyacylglutathione hydrolase (238 aa).

Zn(2+)-binding residues include H52, H54, D56, H57, H108, D125, and H163.

This sequence belongs to the metallo-beta-lactamase superfamily. Glyoxalase II family. Monomer. Zn(2+) is required as a cofactor.

It carries out the reaction an S-(2-hydroxyacyl)glutathione + H2O = a 2-hydroxy carboxylate + glutathione + H(+). It participates in secondary metabolite metabolism; methylglyoxal degradation; (R)-lactate from methylglyoxal: step 2/2. In terms of biological role, thiolesterase that catalyzes the hydrolysis of S-D-lactoyl-glutathione to form glutathione and D-lactic acid. This is Hydroxyacylglutathione hydrolase from Haemophilus influenzae (strain ATCC 51907 / DSM 11121 / KW20 / Rd).